The sequence spans 460 residues: UDP-glycosyltransferase 74B1 (460 aa).

Histidine 22 (proton acceptor) is an active-site residue. An an anthocyanidin-binding site is contributed by histidine 22. Aspartate 113 (charge relay) is an active-site residue. The UDP-alpha-D-glucose site is built by threonine 135, glutamine 339, histidine 354, tryptophan 357, asparagine 358, serine 359, glutamate 362, aspartate 378, and glutamine 379.

It belongs to the UDP-glycosyltransferase family. As to expression, expressed in the vasculature, the apical meristems of roots, shoots and inflorescence, and the junction of organ or branches.

It carries out the reaction (Z)-2-phenyl-1-thioacetohydroximate + UDP-alpha-D-glucose = (Z)-desulfoglucotropeolin + UDP. It catalyses the reaction a (Z)-omega-(methylsulfanyl)alkyl-thiohydroximate + UDP-alpha-D-glucose = an aliphatic (Z)-desulfo-glucosinolate + UDP. The enzyme catalyses (Z)-2-(indol-3-yl)-1-thioacetohydroximate + UDP-alpha-D-glucose = (Z)-indolylmethyl desulfoglucosinolate + UDP. In terms of biological role, involved in the biosynthesis of glucosinolate. In in vitro assay, may use phenylacetothiohydroximate (PATH), but not phenylacetic acid (PAA), indole-3-acetic acid (IAA) or salicylic acid (SA) as substrate. Specific for the thiohydroximate functional group and does not glucosylate the carboxylate group or a hydroxyl group. The chain is UDP-glycosyltransferase 74B1 (UGT74B1) from Arabidopsis thaliana (Mouse-ear cress).